A 421-amino-acid chain; its full sequence is Zinc finger protein 57 (421 aa).

One can recognise a KRAB domain in the interval 15 to 88 (VSYEDVAVSF…SCTGVFKGGP (74 aa)). The C2H2-type 1; degenerate zinc-finger motif lies at 90 to 113 (FFCLTCGKCFKKNTFLFNHQFPVR). C2H2-type zinc fingers lie at residues 140–162 (FFCNFCGKTYRDASGLSRHRRAH) and 168–190 (RSCPECGKCFRDQSEVNRHLKVH). A disordered region spans residues 191 to 221 (QNKPAASNQAGNQASNQRLKSRVPPTTPRSQ). Low complexity predominate over residues 195 to 207 (AASNQAGNQASNQ). Residues 264–286 (ISCPYCHITFTMRTCLLTHLKIH) form a C2H2-type 4 zinc finger. The segment at 313–332 (YTCPVCDSSFRGKESLLDHL) adopts a C2H2-type 5; degenerate zinc-finger fold. Residues 371 to 421 (GKRMESRRRRRKRACTENPETEGLSGKGRVAPWEMEGATSPESPVTEEDSD) form a disordered region.

Belongs to the krueppel C2H2-type zinc-finger protein family. Expressed in oocytes and in a subset of adult tissues. Expressed at high levels in testis, and at low levels in cerebellum. Present in sciatic nerve and spinal cord (at protein level).

The protein resides in the nucleus. Transcription regulator required to maintain maternal and paternal gene imprinting, a process by which gene expression is restricted in a parent of origin-specific manner by epigenetic modification of genomic DNA and chromatin, including DNA methylation. Acts by controlling DNA methylation during the earliest multicellular stages of development at multiple imprinting control regions (ICRs). Acts together with ZNF445, but ZFP57 plays the predominant role in imprinting maintenance. In contrast, in humans, ZNF445 seems to be the major factor early embryonic imprinting maintenance. Required for the establishment of maternal methylation imprints at SNRPN locus. Acts as a transcriptional repressor in Schwann cells. Binds to a 5'-TGCCGC-3' consensus sequence and recognizes the methylated CpG within this element. This chain is Zinc finger protein 57 (Zfp57), found in Mus musculus (Mouse).